A 186-amino-acid chain; its full sequence is Ribosome-recycling factor (186 aa).

The protein belongs to the RRF family.

It is found in the cytoplasm. Responsible for the release of ribosomes from messenger RNA at the termination of protein biosynthesis. May increase the efficiency of translation by recycling ribosomes from one round of translation to another. This Burkholderia cenocepacia (strain HI2424) protein is Ribosome-recycling factor.